The primary structure comprises 116 residues: Protein Wnt-5(I) (116 aa).

S1 is lipidated: O-palmitoleoyl serine; by PORCN. N-linked (GlcNAc...) asparagine glycosylation is present at N69. C82 and C97 form a disulfide bridge.

This sequence belongs to the Wnt family. Palmitoleoylation is required for efficient binding to frizzled receptors. Depalmitoleoylation leads to Wnt signaling pathway inhibition.

It localises to the secreted. Its subcellular location is the extracellular space. It is found in the extracellular matrix. Ligand for members of the frizzled family of seven transmembrane receptors. Probable developmental protein. May be a signaling molecule which affects the development of discrete regions of tissues. Is likely to signal over only few cell diameters. This Eptatretus stoutii (Pacific hagfish) protein is Protein Wnt-5(I) (WNT-5(I)).